A 226-amino-acid chain; its full sequence is 3-dehydroquinate dehydratase (226 aa).

Residues S21, 42-44 (EVR), and R70 each bind 3-dehydroquinate. Catalysis depends on H124, which acts as the Proton donor/acceptor. The active-site Schiff-base intermediate with substrate is K149. The 3-dehydroquinate site is built by R187, T206, and Q210.

Belongs to the type-I 3-dehydroquinase family. Homodimer.

The catalysed reaction is 3-dehydroquinate = 3-dehydroshikimate + H2O. It functions in the pathway metabolic intermediate biosynthesis; chorismate biosynthesis; chorismate from D-erythrose 4-phosphate and phosphoenolpyruvate: step 3/7. Involved in the third step of the chorismate pathway, which leads to the biosynthesis of aromatic amino acids. Catalyzes the cis-dehydration of 3-dehydroquinate (DHQ) and introduces the first double bond of the aromatic ring to yield 3-dehydroshikimate. This Methanothrix thermoacetophila (strain DSM 6194 / JCM 14653 / NBRC 101360 / PT) (Methanosaeta thermophila) protein is 3-dehydroquinate dehydratase.